We begin with the raw amino-acid sequence, 147 residues long: D-aminoacyl-tRNA deacylase (147 aa).

Residues 136–137 (GP) carry the Gly-cisPro motif, important for rejection of L-amino acids motif.

Belongs to the DTD family. Homodimer.

It localises to the cytoplasm. The enzyme catalyses glycyl-tRNA(Ala) + H2O = tRNA(Ala) + glycine + H(+). It catalyses the reaction a D-aminoacyl-tRNA + H2O = a tRNA + a D-alpha-amino acid + H(+). Functionally, an aminoacyl-tRNA editing enzyme that deacylates mischarged D-aminoacyl-tRNAs. Also deacylates mischarged glycyl-tRNA(Ala), protecting cells against glycine mischarging by AlaRS. Acts via tRNA-based rather than protein-based catalysis; rejects L-amino acids rather than detecting D-amino acids in the active site. By recycling D-aminoacyl-tRNA to D-amino acids and free tRNA molecules, this enzyme counteracts the toxicity associated with the formation of D-aminoacyl-tRNA entities in vivo and helps enforce protein L-homochirality. The chain is D-aminoacyl-tRNA deacylase from Sulfurihydrogenibium sp. (strain YO3AOP1).